We begin with the raw amino-acid sequence, 132 residues long: Heat shock protein 15 homolog (132 aa).

The S4 RNA-binding domain occupies 11 to 73; that stretch reads VRLDKWLWAA…DEREVRVLQV (63 aa). Composition is skewed to basic and acidic residues over residues 94-105 and 114-125; these read LKKRAENSEARR and PERRPDKQERRQ. Residues 94-132 are disordered; the sequence is LKKRAENSEARRFNSQFAPSPERRPDKQERRQLIKVKQY.

This sequence belongs to the HSP15 family.

Its function is as follows. May play an important role in binding of nucleic acid. More specific for RNA. The chain is Heat shock protein 15 homolog (hslR) from Aeromonas salmonicida.